Reading from the N-terminus, the 284-residue chain is Tropomyosin beta chain (284 aa).

M1 bears the N-acetylmethionine mark. A disordered region spans residues 1-78; that stretch reads MDAIKKKMQM…EKLEQAEKKA (78 aa). Positions 1–284 form a coiled coil; sequence MDAIKKKMQM…DNALNDITSL (284 aa). 2 stretches are compositionally biased toward basic and acidic residues: residues 12-40 and 51-78; these read KLDK…KQLE and KGTE…EKKA. Residue T53 is modified to Phosphothreonine. A Phosphoserine; by PIK3CG modification is found at S61. Phosphothreonine is present on T79. S87 carries the phosphoserine modification. T108 is modified (phosphothreonine). The disordered stretch occupies residues 117-136; sequence EKAADESERGMKVIENRAMK. S158, S206, and S215 each carry phosphoserine. T252 is subject to Phosphothreonine. Y261 carries the phosphotyrosine modification. Phosphoserine is present on S271. Phosphothreonine is present on T282. S283 is modified (phosphoserine).

This sequence belongs to the tropomyosin family. As to quaternary structure, homodimer. Heterodimer of an alpha (TPM1, TPM3 or TPM4) and a beta (TPM2) chain. Post-translationally, phosphorylated on Ser-61 by PIK3CG. Phosphorylation on Ser-61 is required for ADRB2 internalization.

It localises to the cytoplasm. It is found in the cytoskeleton. Binds to actin filaments in muscle and non-muscle cells. Plays a central role, in association with the troponin complex, in the calcium dependent regulation of vertebrate striated muscle contraction. Smooth muscle contraction is regulated by interaction with caldesmon. In non-muscle cells is implicated in stabilizing cytoskeleton actin filaments. The non-muscle isoform may have a role in agonist-mediated receptor internalization. The chain is Tropomyosin beta chain (Tpm2) from Mus musculus (Mouse).